A 155-amino-acid polypeptide reads, in one-letter code: Small ribosomal subunit protein uS7 (155 aa).

Belongs to the universal ribosomal protein uS7 family. In terms of assembly, part of the 30S ribosomal subunit. Contacts proteins S9 and S11.

Functionally, one of the primary rRNA binding proteins, it binds directly to 16S rRNA where it nucleates assembly of the head domain of the 30S subunit. Is located at the subunit interface close to the decoding center, probably blocks exit of the E-site tRNA. The protein is Small ribosomal subunit protein uS7 of Helicobacter hepaticus (strain ATCC 51449 / 3B1).